We begin with the raw amino-acid sequence, 136 residues long: MARTKQTARKSTGAKVPRKHLSSKSSFPSKPVNEVLKKTHRFRPGTVALREIRRYQKSSDLLIKKLPFQRLVREIAQEFKTDLRFQAAAIEALQEATEAYLVGLFEDTNLCAIHAKRVTIMVKDIQLARRIRGERA.

The segment at 1–30 is disordered; it reads MARTKQTARKSTGAKVPRKHLSSKSSFPSK. The residue at position 5 (Lys5) is an N6,N6,N6-trimethyllysine; by set1; alternate. Lys5 bears the N6,N6-dimethyllysine; by set1; alternate mark. An N6-acetyllysine; alternate mark is found at Lys5 and Lys10. An N6-methyllysine; by set1; alternate modification is found at Lys5. An N6,N6,N6-trimethyllysine; alternate modification is found at Lys10. An N6,N6-dimethyllysine; alternate modification is found at Lys10. Lys10 is modified (N6-methyllysine; alternate). At Ser11 the chain carries Phosphoserine. Lys15 carries the N6-acetyllysine modification. N6-acetyllysine; alternate is present on residues Lys19, Lys24, and Lys37. Residues Lys19, Lys24, and Lys37 each carry the N6-methyllysine; alternate modification. An N6,N6,N6-trimethyllysine; alternate modification is found at Lys37. An N6,N6-dimethyllysine; alternate modification is found at Lys37. The residue at position 57 (Lys57) is an N6-acetyllysine. An N6,N6,N6-trimethyllysine; alternate modification is found at Lys80. Lys80 is subject to N6,N6-dimethyllysine; alternate. Lys80 bears the N6-methyllysine; alternate mark.

It belongs to the histone H3 family. The nucleosome is a histone octamer containing two molecules each of H2A, H2B, H3 and H4 assembled in one H3-H4 heterotetramer and two H2A-H2B heterodimers. The octamer wraps approximately 147 bp of DNA. Acetylation is generally linked to gene activation. Post-translationally, different methylation states of H3K4 mark distinct developmental phases. H3K4me2 is associated with euchromatic regions. H3K4me3 is a mark of active chromatin. set1 is responsible for all mono-, di- and tri-methylation of H3K4. H3K4me facilitates subsequent acetylation of H3 and H4. Methylation at H3K9 is linked to gene repression. In terms of processing, H3S10ph, which is linked to gene activation, prevents methylation at H3K9 but facilitates acetylation of H3 and H4.

The protein localises to the nucleus. It localises to the chromosome. In terms of biological role, core component of nucleosome. Nucleosomes wrap and compact DNA into chromatin, limiting DNA accessibility to the cellular machineries which require DNA as a template. Histones thereby play a central role in transcription regulation, DNA repair, DNA replication and chromosomal stability. DNA accessibility is regulated via a complex set of post-translational modifications of histones, also called histone code, and nucleosome remodeling. This Dictyostelium discoideum (Social amoeba) protein is Histone H3.3 type c (H3c).